The following is a 35-amino-acid chain: uncharacterized protein (35 aa).

This is an uncharacterized protein from Escherichia coli (Bacteriophage T3).